The sequence spans 314 residues: MPLRLIFMGTPDFAVPTLQQLVAHGHEIAAVYTREARPAGRGMKLQPTPVAREAQRLGLPVLTPKTLKTQESQDQLRSYGADAAVVVAYGLILPQAILDAPRYGCYNLHASLLPRWRGAAPINRAVMAGDAESGVMVMKIDAGLDTGDVAMAERVPITDAMTASDLHDTLAPLGADLMARAMDALERGELRLTKQSEQGVASTVTYAAKIDKAEAHIVWSNPAREVLRHIHGLSPFPGAWCEMPVDGEAVRIKILRCELAEGAGSPGDLLDDRLTIACKDGAIRVLELQRAGKPPMKAAAFLNGTPLTPPLRLD.

Position 111-114 (111-114 (SLLP)) interacts with (6S)-5,6,7,8-tetrahydrofolate.

The protein belongs to the Fmt family.

It carries out the reaction L-methionyl-tRNA(fMet) + (6R)-10-formyltetrahydrofolate = N-formyl-L-methionyl-tRNA(fMet) + (6S)-5,6,7,8-tetrahydrofolate + H(+). Functionally, attaches a formyl group to the free amino group of methionyl-tRNA(fMet). The formyl group appears to play a dual role in the initiator identity of N-formylmethionyl-tRNA by promoting its recognition by IF2 and preventing the misappropriation of this tRNA by the elongation apparatus. This chain is Methionyl-tRNA formyltransferase, found in Nitrobacter winogradskyi (strain ATCC 25391 / DSM 10237 / CIP 104748 / NCIMB 11846 / Nb-255).